The sequence spans 189 residues: Dual-action ribosomal maturation protein DarP (189 aa).

The tract at residues 1 to 22 (MWKNGAMRGCNKETGEFLGPSR) is disordered.

It belongs to the DarP family.

It localises to the cytoplasm. In terms of biological role, member of a network of 50S ribosomal subunit biogenesis factors which assembles along the 30S-50S interface, preventing incorrect 23S rRNA structures from forming. Promotes peptidyl transferase center (PTC) maturation. In Xylella fastidiosa (strain Temecula1 / ATCC 700964), this protein is Dual-action ribosomal maturation protein DarP.